The following is a 313-amino-acid chain: MSVIEQNSVEYPPLIVSEAGVSDYIALLKPRVMSLVVFTALVGLVIAPVHLHPVLAATSILCIAVGGGAAGALNMWYESDIDALMTRTANRPIPRGRVSSPEAAAFGITLAIFSVATLGVLVNWLAGALLAFTIFFYAVVYTMWLKRWTAQNIVIGGAAGALPPVVAWAAATGSLAPQPIILFLIIFLWTPPHFWALALFRSDDYARAKVPMLPVVAGPDATRLQILLYTIVLVTVAILPWPLGYFGAAYGLTSVALGAGMLWFAFNVYRYRTGTQANRAARALFKFSLLYLFLLFAVLPLEVAAHAVAAMIW.

9 helical membrane-spanning segments follow: residues 35-55 (LVVF…HPVL), 56-76 (AATS…LNMW), 98-118 (VSSP…VATL), 120-140 (VLVN…YAVV), 153-173 (IVIG…AATG), 180-200 (IILF…LALF), 226-246 (ILLY…LGYF), 248-268 (AAYG…AFNV), and 292-312 (LFLL…AAMI).

The protein belongs to the UbiA prenyltransferase family. Protoheme IX farnesyltransferase subfamily.

Its subcellular location is the cell inner membrane. It catalyses the reaction heme b + (2E,6E)-farnesyl diphosphate + H2O = Fe(II)-heme o + diphosphate. It functions in the pathway porphyrin-containing compound metabolism; heme O biosynthesis; heme O from protoheme: step 1/1. Converts heme B (protoheme IX) to heme O by substitution of the vinyl group on carbon 2 of heme B porphyrin ring with a hydroxyethyl farnesyl side group. The sequence is that of Protoheme IX farnesyltransferase from Afipia carboxidovorans (strain ATCC 49405 / DSM 1227 / KCTC 32145 / OM5) (Oligotropha carboxidovorans).